The chain runs to 384 residues: MSAVNSEATTNLLAEFQKLRGETIGLHSIFSEKSTVDISNLNGNTTLKRIEDSCEELKNEIREHVQVSSDELKSIRTANSGFLNKIEESLKTSQQEAREDLKAIEKKNESLLNKSLNELKFQKEQLKYVEATLISQQKLIEHMAKELTGKSISDMVKNNEDDGTHFEFSHTFNSVATLEKGVERRSELKEGCGSLNWFMSIKRERPSRKLLVYLNLDCEKLPTNNWIIEADIQCTLNQYYFNEWVRKFERKEDAIFKCENGEYTDKLVFNFGEYEEILRTFTKNGVWNIEFDVDIIKTVGLSKKKLRCFDESAAEVSDAVMIVKDEKFHVSKMFLAAQSSNFKLLFKNSNNSEFTLDGINSEDFQCFLELLYGEPALTGRLLNN.

The stretch at 41–127 forms a coiled coil; sequence LNGNTTLKRI…ELKFQKEQLK (87 aa). Positions 167–277 constitute an MATH domain; sequence EFSHTFNSVA…VFNFGEYEEI (111 aa). Positions 317 to 380 constitute a BTB domain; sequence SDAVMIVKDE…LYGEPALTGR (64 aa).

The protein is BTB and MATH domain-containing protein 34 (bath-34) of Caenorhabditis elegans.